Reading from the N-terminus, the 142-residue chain is Small ribosomal subunit protein uS12 (142 aa).

The protein belongs to the universal ribosomal protein uS12 family. In terms of assembly, part of the 30S ribosomal subunit.

In terms of biological role, with S4 and S5 plays an important role in translational accuracy. Located at the interface of the 30S and 50S subunits. In Thermoplasma acidophilum (strain ATCC 25905 / DSM 1728 / JCM 9062 / NBRC 15155 / AMRC-C165), this protein is Small ribosomal subunit protein uS12.